We begin with the raw amino-acid sequence, 151 residues long: Neuroglobin (151 aa).

The region spanning 1-149 (MERPEHELIR…VVQAMSRGWN (149 aa)) is the Globin domain. Residues His-64 and His-96 each contribute to the heme b site.

Belongs to the globin family. Monomer. Homodimer and homotetramer; disulfide-linked. Mainly monomeric but also detected as part of homodimers and homotetramers. Interacts with 14-3-3 proteins; regulates the phosphorylation of NGB. Could interact (ferrous form) with G-alpha(i) proteins (GTP-bound form). Phosphorylated during hypoxia by ERK1/ERK2. Phosphorylation regulates the heme pocket hexacoordination preventing the association of His-64 with the heme metal center. Thereby, promotes the access of dioxygen and nitrite to the heme and stimulates the nitrite reductase activity. Phosphorylation during hypoxia is stabilized by 14-3-3 proteins.

The protein resides in the cytoplasm. The protein localises to the cytosol. It is found in the mitochondrion matrix. It catalyses the reaction Fe(III)-heme b-[protein] + nitric oxide + H2O = Fe(II)-heme b-[protein] + nitrite + 2 H(+). Monomeric globin with a bis-histidyl six-coordinate heme-iron atom through which it can bind dioxygen, carbon monoxide and nitric oxide. Could help transport oxygen and increase its availability to the metabolically active neuronal tissues, though its low quantity in tissues as well as its high affinity for dioxygen, which may limit its oxygen-releasing ability, argue against it. The ferrous/deoxygenated form exhibits a nitrite reductase activity and it could produce nitric oxide which in turn inhibits cellular respiration in response to hypoxia. In its ferrous/deoxygenated state, it may also exhibit GDI (Guanine nucleotide Dissociation Inhibitor) activity toward heterotrimeric G-alpha proteins, thereby regulating signal transduction to facilitate neuroprotective responses in the wake of hypoxia and associated oxidative stress. This Sus scrofa (Pig) protein is Neuroglobin.